Here is a 307-residue protein sequence, read N- to C-terminus: Small ribosomal subunit biogenesis GTPase RsgA (307 aa).

The segment at 1-20 is disordered; it reads MPSEHPFSDGISTPNPKETM. Over residues 10-20 the composition is skewed to polar residues; the sequence is GISTPNPKETM. Positions 85–242 constitute a CP-type G domain; sequence RQDAWKTKLI…LIDSPGLQEF (158 aa). Residues 135 to 138 and 184 to 192 each bind GTP; these read NKAD and GQSGMGKST. Positions 266, 271, 273, and 279 each coordinate Zn(2+).

This sequence belongs to the TRAFAC class YlqF/YawG GTPase family. RsgA subfamily. Monomer. Associates with 30S ribosomal subunit, binds 16S rRNA. Zn(2+) is required as a cofactor.

It localises to the cytoplasm. One of several proteins that assist in the late maturation steps of the functional core of the 30S ribosomal subunit. Helps release RbfA from mature subunits. May play a role in the assembly of ribosomal proteins into the subunit. Circularly permuted GTPase that catalyzes slow GTP hydrolysis, GTPase activity is stimulated by the 30S ribosomal subunit. This is Small ribosomal subunit biogenesis GTPase RsgA from Neisseria meningitidis serogroup C / serotype 2a (strain ATCC 700532 / DSM 15464 / FAM18).